The chain runs to 407 residues: MTTARPNSYRSGPDERGHFGIFGGRFVAETLMPLILDLEKAYADAKADPAFQAEMNSYRTHYVGRPSPLYYAERLTQHLGGAKIYFKRDELNHTGSHKVNNVLGQIMLARRMGKRRIIAETGAGQHGVATATLCARFGLDCVVYMGAVDVERQQPNVLRMEMLGAKVVPVQSGARTLKDAMNEALRDWVTNVHDTFYCIGTVAGPHPYPMMVRDFQSVIGDETRVQMQEAEGRLPDSLVACIGGGSNAMGLFHPFLDDPSVEIFGVEAAGHGLTQLHAASIAGGRPGVLHGNRTYLLMDEDGQIAEAHSISAGLDYPGIGPEHSWLFEAKRVTYLSATDDEALAAFQLLSRLEGIIPALEPAHAIAKVMELAPKKPKEHLMVVNLCGRGDKDVPQVGEILRKRAKES.

Lys98 is modified (N6-(pyridoxal phosphate)lysine).

It belongs to the TrpB family. As to quaternary structure, tetramer of two alpha and two beta chains. Requires pyridoxal 5'-phosphate as cofactor.

The catalysed reaction is (1S,2R)-1-C-(indol-3-yl)glycerol 3-phosphate + L-serine = D-glyceraldehyde 3-phosphate + L-tryptophan + H2O. It participates in amino-acid biosynthesis; L-tryptophan biosynthesis; L-tryptophan from chorismate: step 5/5. The beta subunit is responsible for the synthesis of L-tryptophan from indole and L-serine. The chain is Tryptophan synthase beta chain from Bradyrhizobium sp. (strain BTAi1 / ATCC BAA-1182).